The sequence spans 361 residues: Phosphoserine aminotransferase (361 aa).

Arg-42 is a binding site for L-glutamate. Residues 76-77, Trp-102, Thr-153, Asp-173, and Gln-196 contribute to the pyridoxal 5'-phosphate site; that span reads AR. At Lys-197 the chain carries N6-(pyridoxal phosphate)lysine. Residue 238-239 coordinates pyridoxal 5'-phosphate; it reads NT.

The protein belongs to the class-V pyridoxal-phosphate-dependent aminotransferase family. SerC subfamily. In terms of assembly, homodimer. Pyridoxal 5'-phosphate is required as a cofactor.

Its subcellular location is the cytoplasm. The catalysed reaction is O-phospho-L-serine + 2-oxoglutarate = 3-phosphooxypyruvate + L-glutamate. It carries out the reaction 4-(phosphooxy)-L-threonine + 2-oxoglutarate = (R)-3-hydroxy-2-oxo-4-phosphooxybutanoate + L-glutamate. The protein operates within amino-acid biosynthesis; L-serine biosynthesis; L-serine from 3-phospho-D-glycerate: step 2/3. It functions in the pathway cofactor biosynthesis; pyridoxine 5'-phosphate biosynthesis; pyridoxine 5'-phosphate from D-erythrose 4-phosphate: step 3/5. Catalyzes the reversible conversion of 3-phosphohydroxypyruvate to phosphoserine and of 3-hydroxy-2-oxo-4-phosphonooxybutanoate to phosphohydroxythreonine. The chain is Phosphoserine aminotransferase from Pectobacterium atrosepticum (strain SCRI 1043 / ATCC BAA-672) (Erwinia carotovora subsp. atroseptica).